The sequence spans 544 residues: Chaperonin GroEL (544 aa).

ATP-binding positions include 29-32 (TLGP), 86-90 (DGTTT), Gly-413, 476-478 (NAA), and Asp-492.

This sequence belongs to the chaperonin (HSP60) family. In terms of assembly, forms a cylinder of 14 subunits composed of two heptameric rings stacked back-to-back. Interacts with the co-chaperonin GroES.

The protein localises to the cytoplasm. The enzyme catalyses ATP + H2O + a folded polypeptide = ADP + phosphate + an unfolded polypeptide.. Its function is as follows. Together with its co-chaperonin GroES, plays an essential role in assisting protein folding. The GroEL-GroES system forms a nano-cage that allows encapsulation of the non-native substrate proteins and provides a physical environment optimized to promote and accelerate protein folding. The protein is Chaperonin GroEL of Bacillus licheniformis (strain ATCC 14580 / DSM 13 / JCM 2505 / CCUG 7422 / NBRC 12200 / NCIMB 9375 / NCTC 10341 / NRRL NRS-1264 / Gibson 46).